The sequence spans 205 residues: Large ribosomal subunit protein uL4 (205 aa).

It belongs to the universal ribosomal protein uL4 family. In terms of assembly, part of the 50S ribosomal subunit. Contacts proteins L15 and L34.

Its function is as follows. One of the primary rRNA binding proteins, this protein initially binds near the 5'-end of the 23S rRNA. It is important during the early stages of 50S assembly. Functionally, makes multiple contacts with different domains of the 23S rRNA in the assembled 50S subunit. In terms of biological role, this protein is located close to the polypeptide exit tunnel, and interacts with the modified macrolide azithromycin, which blocks the tunnel. The sequence is that of Large ribosomal subunit protein uL4 (rplD) from Deinococcus radiodurans (strain ATCC 13939 / DSM 20539 / JCM 16871 / CCUG 27074 / LMG 4051 / NBRC 15346 / NCIMB 9279 / VKM B-1422 / R1).